Reading from the N-terminus, the 406-residue chain is Corticosteroid-binding globulin (406 aa).

Positions 1-22 (MPLLLYTCLLWLLSSGLWTVQA) are cleaved as a signal peptide. 2 N-linked (GlcNAc...) asparagine glycosylation sites follow: N31 and N96. Cortisol is bound at residue Q255. N261 carries an N-linked (GlcNAc...) asparagine glycan. D287 provides a ligand contact to cortisol. 2 N-linked (GlcNAc...) asparagine glycosylation sites follow: N331 and N360. Position 394 (W394) interacts with cortisol.

It belongs to the serpin family. Expressed by the liver; secreted in plasma.

The protein localises to the secreted. Major transport protein for glucocorticoids and progestins in the blood of almost all vertebrate species. This chain is Corticosteroid-binding globulin (SERPINA6), found in Saimiri sciureus (Common squirrel monkey).